Here is a 335-residue protein sequence, read N- to C-terminus: Ornithine carbamoyltransferase 2, catabolic (335 aa).

Residues 62-65 (STRT), glutamine 89, arginine 113, and 140-143 (HPTQ) each bind carbamoyl phosphate. L-ornithine is bound by residues asparagine 172, aspartate 236, and 240–241 (SM). Carbamoyl phosphate contacts are provided by residues 277 to 278 (CL) and arginine 322.

The protein belongs to the aspartate/ornithine carbamoyltransferase superfamily. OTCase family.

The protein localises to the cytoplasm. It carries out the reaction carbamoyl phosphate + L-ornithine = L-citrulline + phosphate + H(+). The protein operates within amino-acid degradation; L-arginine degradation via ADI pathway; carbamoyl phosphate from L-arginine: step 2/2. Functionally, reversibly catalyzes the transfer of the carbamoyl group from carbamoyl phosphate (CP) to the N(epsilon) atom of ornithine (ORN) to produce L-citrulline. The chain is Ornithine carbamoyltransferase 2, catabolic (arcB2) from Staphylococcus epidermidis (strain ATCC 12228 / FDA PCI 1200).